The primary structure comprises 109 residues: Oncomodulin (109 aa).

The residue at position 2 (serine 2) is an N-acetylserine. EF-hand domains lie at 39–74 and 78–109; these read MSASQVKDVFRFIDNDQSGYLDEEELKFFLQKFESG and LTESETKSLMAAADNDGDGKIGADEFQEMVHS. The Ca(2+) site is built by aspartate 52, aspartate 54, serine 56, tyrosine 58, glutamate 63, aspartate 91, aspartate 93, aspartate 95, lysine 97, and glutamate 102.

Belongs to the parvalbumin family. As to expression, abundant in the organ of Corti.

In terms of biological role, has some calmodulin-like activity with respect to enzyme activation and growth regulation. Binds two calcium ions. The chain is Oncomodulin (OCM) from Cavia porcellus (Guinea pig).